The following is a 140-amino-acid chain: Arsenate-mycothiol transferase ArsC1 (140 aa).

Belongs to the low molecular weight phosphotyrosine protein phosphatase family.

The protein localises to the cytoplasm. It carries out the reaction mycothiol + arsenate = arseno-mycothiol + H2O. In terms of biological role, involved in defense against toxic arsenate. Involved in the mycothiol/myoredoxin redox pathway which uses a mycothioltransferase mechanism; facilitates adduct formation between arsenate and mycothiol. This is Arsenate-mycothiol transferase ArsC1 (arsC1) from Corynebacterium glutamicum (strain ATCC 13032 / K051).